A 578-amino-acid polypeptide reads, in one-letter code: L-2,3-diaminopropanoate--citrate ligase (578 aa).

The protein belongs to the IucA/IucC family. In terms of assembly, forms a mixture of monomer and dimer in solution.

The enzyme catalyses (S)-2,3-diaminopropanoate + citrate + ATP = 2-[(L-alanin-3-ylcarbamoyl)methyl]-2-hydroxybutanedioate + AMP + diphosphate. It participates in siderophore biosynthesis. Functionally, catalyzes the synthesis of citryl-L-2,3-diaminopropionic acid from L-2,3-diaminopropionic acid (L-Dap) and citrate, the first step in staphyloferrin B biosynthesis. The polypeptide is L-2,3-diaminopropanoate--citrate ligase (Staphylococcus aureus (strain NCTC 8325 / PS 47)).